A 120-amino-acid polypeptide reads, in one-letter code: U13-lycotoxin-Ls1a (120 aa).

The N-terminal stretch at 1-16 (MKILFVLISILYAVYC) is a signal peptide. The propeptide occupies 17–54 (FSSEEDVDSAYLANELEPVEDINSEQYAALEPKEEQER). Cystine bridges form between Cys56-Cys70, Cys63-Cys76, Cys69-Cys87, and Cys78-Cys85. The Agouti domain occupies 56-95 (CADMGQDCKDDCDCCLNIATCNCWFGRYFCSCTFGDYQTC).

This sequence belongs to the neurotoxin 05 (agouti) family. Post-translationally, contains 6 disulfide bonds. Expressed by the venom gland.

The protein localises to the secreted. This chain is U13-lycotoxin-Ls1a, found in Lycosa singoriensis (Wolf spider).